The primary structure comprises 216 residues: ADP-ribosylation factor D (216 aa).

Over residues 188 to 204 (SKFSFSNKSKQQKSNSQ) the composition is skewed to low complexity. Positions 188-216 (SKFSFSNKSKQQKSNSQPNTPRKNIQMMT) are disordered. Positions 205–216 (PNTPRKNIQMMT) are enriched in polar residues.

The protein belongs to the small GTPase superfamily. Arf family.

Its subcellular location is the golgi apparatus. In terms of biological role, GTP-binding protein involved in protein trafficking; may modulate vesicle budding and uncoating within the Golgi apparatus. The sequence is that of ADP-ribosylation factor D (arrD) from Dictyostelium discoideum (Social amoeba).